We begin with the raw amino-acid sequence, 472 residues long: Probable dipeptidase A (472 aa).

C10 is an active-site residue.

It belongs to the peptidase C69 family.

The catalysed reaction is an L-aminoacyl-L-amino acid + H2O = 2 an L-alpha-amino acid. This chain is Probable dipeptidase A (pepDA), found in Streptococcus pyogenes serotype M1.